The following is a 203-amino-acid chain: Glutathione S-transferase (203 aa).

In terms of domain architecture, GST N-terminal spans 2 to 79; sequence PDYKVYYFNV…YLANQVGLAG (78 aa). Residues Y8, W39, K43, 49 to 51, and 63 to 64 contribute to the glutathione site; these read GQM and QS. In terms of domain architecture, GST C-terminal spans 81-203; the sequence is DDWENLMIDT…YIAKRPITEV (123 aa).

This sequence belongs to the GST superfamily. Sigma family. As to quaternary structure, homodimer.

The catalysed reaction is RX + glutathione = an S-substituted glutathione + a halide anion + H(+). Functionally, conjugation of reduced glutathione to a wide number of exogenous and endogenous hydrophobic electrophiles. This chain is Glutathione S-transferase (GstS1), found in Anopheles gambiae (African malaria mosquito).